A 554-amino-acid chain; its full sequence is Valerianol synthase TPS1B (554 aa).

2 residues coordinate Mg(2+): aspartate 307 and aspartate 311. A DDXXD motif motif is present at residues 326–330 (VQRWD). Residues aspartate 452, serine 456, and glutamate 460 each contribute to the Mg(2+) site.

It belongs to the terpene synthase family. The cofactor is Mg(2+).

The catalysed reaction is (2E,6E)-farnesyl diphosphate + H2O = valerianol + diphosphate. It functions in the pathway secondary metabolite biosynthesis; terpenoid biosynthesis. Its function is as follows. Terpene synthase that catalyzes the biosynthesis of the terpene valerianol, which is a volatile compound of floral scent. This chain is Valerianol synthase TPS1B, found in Camellia hiemalis (Camellia).